A 618-amino-acid polypeptide reads, in one-letter code: MPAYRSRTTTHGRNMAGARGLWRATGMKDSDFGKPIIAVVNSFTQFVPGHVHLKDLGQLVAREIEAAGGVAKEFNTIAVDDGIAMGHDGMLYSLPSRELIADSVEYMVNAHCADAMVCISNCDKITPGMLMAAMRLNIPAVFVSGGPMEAGKVVLKGKTHAVDLIDAMVAAADSAMSDEDVQTMERSACPTCGSCSGMFTANSMNCLTEALGLSLPGNGSVLATHADRKRLFVEAGHTIVDLARRYYEGDDASVLPRNIANFKAFENAMTLDIAMGGSTNTVLHLLAAAREAELDFSMKDIDRLSRRVPCLSKIAPSVSDVHMEDVHRAGGIMAILGELDRAGLLDTSCTTVHSETLGAALARWDIRQSNSESVRTFFRAAPGGVPSQTAFSQDRRYDELDLDREKGVIRDAAHAFSKDGGLAVLYGNIALDGCIVKTAGVDASILTFSGPVKVFESQDDAVSAILTNKIVAGDVVVIRYEGPRGGPGMQEMLYPTSYLKSKGLGKACALITDGRFSGGTSGLSIGHVSPEAAEGGLIGLVRDGDRISIDIPNRTISLDVSEAELAKRGEEERARGEAAWTPKDRKRNVSAALQAYAMLTTSAANGAVRDVKRRFGKN.

Residue aspartate 81 participates in Mg(2+) binding. Residue cysteine 122 participates in [2Fe-2S] cluster binding. 2 residues coordinate Mg(2+): aspartate 123 and lysine 124. At lysine 124 the chain carries N6-carboxylysine. Cysteine 195 is a [2Fe-2S] cluster binding site. Glutamate 491 contacts Mg(2+). Serine 517 acts as the Proton acceptor in catalysis.

It belongs to the IlvD/Edd family. As to quaternary structure, homodimer. [2Fe-2S] cluster serves as cofactor. It depends on Mg(2+) as a cofactor.

The catalysed reaction is (2R)-2,3-dihydroxy-3-methylbutanoate = 3-methyl-2-oxobutanoate + H2O. The enzyme catalyses (2R,3R)-2,3-dihydroxy-3-methylpentanoate = (S)-3-methyl-2-oxopentanoate + H2O. Its pathway is amino-acid biosynthesis; L-isoleucine biosynthesis; L-isoleucine from 2-oxobutanoate: step 3/4. It functions in the pathway amino-acid biosynthesis; L-valine biosynthesis; L-valine from pyruvate: step 3/4. Functionally, functions in the biosynthesis of branched-chain amino acids. Catalyzes the dehydration of (2R,3R)-2,3-dihydroxy-3-methylpentanoate (2,3-dihydroxy-3-methylvalerate) into 2-oxo-3-methylpentanoate (2-oxo-3-methylvalerate) and of (2R)-2,3-dihydroxy-3-methylbutanoate (2,3-dihydroxyisovalerate) into 2-oxo-3-methylbutanoate (2-oxoisovalerate), the penultimate precursor to L-isoleucine and L-valine, respectively. The polypeptide is Dihydroxy-acid dehydratase (Rhodopseudomonas palustris (strain ATCC BAA-98 / CGA009)).